The chain runs to 239 residues: tRNA (guanine-N(7)-)-methyltransferase (239 aa).

Residues Glu-69, Glu-94, Asp-121, and Asp-144 each contribute to the S-adenosyl-L-methionine site. Asp-144 is a catalytic residue. Position 148 (Lys-148) interacts with substrate. The tract at residues 150 to 155 (RHNKRR) is interaction with RNA. Substrate is bound by residues Asp-180 and 217 to 220 (TKFE).

The protein belongs to the class I-like SAM-binding methyltransferase superfamily. TrmB family. Monomer.

The enzyme catalyses guanosine(46) in tRNA + S-adenosyl-L-methionine = N(7)-methylguanosine(46) in tRNA + S-adenosyl-L-homocysteine. It functions in the pathway tRNA modification; N(7)-methylguanine-tRNA biosynthesis. Its function is as follows. Catalyzes the formation of N(7)-methylguanine at position 46 (m7G46) in tRNA. This chain is tRNA (guanine-N(7)-)-methyltransferase, found in Escherichia coli O6:H1 (strain CFT073 / ATCC 700928 / UPEC).